A 498-amino-acid chain; its full sequence is Glycerol kinase (498 aa).

Thr12 lines the ADP pocket. Thr12, Thr13, and Ser14 together coordinate ATP. Thr12 serves as a coordination point for sn-glycerol 3-phosphate. ADP is bound at residue Arg16. The sn-glycerol 3-phosphate site is built by Arg82, Glu83, Tyr135, and Asp245. Glycerol-binding residues include Arg82, Glu83, Tyr135, Asp245, and Gln246. Thr267 and Gly310 together coordinate ADP. Positions 267, 310, 314, and 411 each coordinate ATP. ADP contacts are provided by Gly411 and Asn415.

This sequence belongs to the FGGY kinase family. In terms of assembly, homotetramer and homodimer (in equilibrium).

It catalyses the reaction glycerol + ATP = sn-glycerol 3-phosphate + ADP + H(+). Its pathway is polyol metabolism; glycerol degradation via glycerol kinase pathway; sn-glycerol 3-phosphate from glycerol: step 1/1. Its activity is regulated as follows. Activated by phosphorylation and inhibited by fructose 1,6-bisphosphate (FBP). In terms of biological role, key enzyme in the regulation of glycerol uptake and metabolism. Catalyzes the phosphorylation of glycerol to yield sn-glycerol 3-phosphate. The sequence is that of Glycerol kinase from Clostridium botulinum (strain Eklund 17B / Type B).